Reading from the N-terminus, the 553-residue chain is Copine-9 (553 aa).

C2 domains follow at residues 1 to 125 (MSLS…ERPL) and 132 to 255 (KCGT…FTVY). Residues D163, D169, D225, D227, and D233 each contribute to the Ca(2+) site. A VWFA domain is found at 299–500 (NFTVAIDFTA…VQFVPFRDYV (202 aa)). The interval 531–553 (TRDIQPRPPPPVSPNPTPAPEQP) is disordered. The span at 536–553 (PRPPPPVSPNPTPAPEQP) shows a compositional bias: pro residues.

It belongs to the copine family. The cofactor is Ca(2+).

Its function is as follows. Probable calcium-dependent phospholipid-binding protein that may play a role in calcium-mediated intracellular processes. Plays a role in dendrite formation by melanocytes. The protein is Copine-9 of Mus musculus (Mouse).